A 176-amino-acid polypeptide reads, in one-letter code: MPVNALTNSFVLGAAGGGVEWGTVIVTVITFAILLALLKKFAWGPLKEVMDKRERDINRDIDEAEEAKLNAQKLEEENKKTLKQTQDEVQRILEDARVQARKQHEEIIHEANIRANGMIETAQSEINSEKERALADINNQVSELSVLIASKVLKKEISEQDQKELVDKYLKEAGDK.

Residues glycine 18–leucine 38 form a helical membrane-spanning segment.

Belongs to the ATPase B chain family. As to quaternary structure, F-type ATPases have 2 components, F(1) - the catalytic core - and F(0) - the membrane proton channel. F(1) has five subunits: alpha(3), beta(3), gamma(1), delta(1), epsilon(1). F(0) has three main subunits: a(1), b(2) and c(10-14). The alpha and beta chains form an alternating ring which encloses part of the gamma chain. F(1) is attached to F(0) by a central stalk formed by the gamma and epsilon chains, while a peripheral stalk is formed by the delta and b chains.

It is found in the cell membrane. In terms of biological role, f(1)F(0) ATP synthase produces ATP from ADP in the presence of a proton or sodium gradient. F-type ATPases consist of two structural domains, F(1) containing the extramembraneous catalytic core and F(0) containing the membrane proton channel, linked together by a central stalk and a peripheral stalk. During catalysis, ATP synthesis in the catalytic domain of F(1) is coupled via a rotary mechanism of the central stalk subunits to proton translocation. Its function is as follows. Component of the F(0) channel, it forms part of the peripheral stalk, linking F(1) to F(0). The polypeptide is ATP synthase subunit b (Staphylococcus haemolyticus (strain JCSC1435)).